A 1295-amino-acid polypeptide reads, in one-letter code: MDLTTTSHARVDSGGVPFTSSLNDPTPPKLSASIALPAHLHLLAKAYGIPESHILQLAWALAANEQNARTAQWEHLELDERQAISWVLRHWQDPSVHRYLSPDELRGDKHQIPATVMAVVEEYSLFQTLALTGSETEIGMCFHPSTEQPWLRVIWNPEGMLASSASRLTRALESALHAVFLTPHVKVGDLTLFSIWDHQQILQWNSHYPQATDRLVHELFKDVVDASPQANAVAAWDGELTYRELDRLSSRLSGRLQDEFGVQPETIVVLCFEKSVWAIVAMLAVVKAGGAFLHVDPQHPAVRHQAMVQTTAAKLVLCSARTRSIISASVPECTSLVIDRRAFSVEPDHVQHETLLSSQNLSPRNAAYVVCTSGSTGTPKAIVVEHASLSTSVDAQANAMEISSGSRVLQYAAYTFDVSVGDIFTALTHGACICIPSDWERSHDLAGAINRLNVNQACLTSTVASILSPAEVPGLEKLTLGGEPATRQCVDAWAEQVRLKNVYGPAECTVWCMIQPEVSRHISVSNIGHGIGARAWIVHPEDHDRLMPVGAVGELLIEGPLVARGYLNDSTRTDEVFLSQPPRWLESFGPTPSRSRFYKTGDLARYGPAGALLFEGRKDTQIKLRGQRIELSEIEYRLHRALSDQVATAVELAHPKGSTAPVLAAFITWDQGIDLQNVQNVTLDARQEFEELASRIKAEIEQALPSYMVPALFIPVQTLPLTTSGKLDRKSLRHFCSQCSHEFLKKLDDSSPADAAPKESANPAEENLARLWAQVLERKSESIRRGDNFLSLGGDSLAAMRLVNLAARDLRLTLTVADVFNSPILADQANLLRPLVQTKHIAPFELVTDGDLPIQDLMDSVAKQCGLTSDQVEDVYPCTPYQEEMVRDSLSGTRTQMGQEVIQLASDLDLSRYLSACARVFQRCPILRTRFVEISGKLLQVVIREDISWQRPTSLAAYIEADNQTPPTLGKPLARWALTEDSTHLVLTMHHAIFDGISLGQIFGAIYAVYQSIPLPQVNLTFATFIGKIYRPHHDLPDASKQFWRSYLSPTAGSNDAPLSDVERASRPCANSGTQRLVTFQAGAVKALQQHGLTEATLARAAWACTLARGRQSPDSDVIFGTILTGRNIHLPGVDALAAPALAHTPIRVRMAAAQQEKPAHFLARVQADATAMIPFEHDGMDRIRALDEQVRVACDNMRTLLVIQPIPEGLILDSKSPFPGTMLSGPRVEAREMRHFHWYGLLMECTLLPMDGFFVRMSFDDTLYSPEAAERLLDEYSQTLHELAHGLTVDGSTE.

The interval 1 to 24 (MDLTTTSHARVDSGGVPFTSSLND) is disordered. Residues 221 to 624 (KDVVDASPQA…EGRKDTQIKL (404 aa)) are adenylation. The 78-residue stretch at 759-836 (ESANPAEENL…DQANLLRPLV (78 aa)) folds into the Carrier domain. Position 796 is an O-(pantetheine 4'-phosphoryl)serine (Ser-796). The segment at 873 to 1284 (EDVYPCTPYQ…DEYSQTLHEL (412 aa)) is condensation.

The protein belongs to the NRP synthetase family. Requires pantetheine 4'-phosphate as cofactor.

It catalyses the reaction restrictinol + glycine + H(+) = restricticin + H2O. The protein operates within antifungal biosynthesis. Its function is as follows. Nonribosomal peptide synthetase; part of the gene cluster that mediates the biosynthesis of the tetrahydropyranyl antifungal agent restricticin that acts as an inhibitor of CYP51 and blocks the ergosterol biosynthesis. Within the pathway, resC catalyzes the C3 esterification of restrictinol with glycine to yield restricticin. ResC represents an example of the emerging class of single-module NRPS-like enzymes that perform esterification reactions. The highly reducing polyketide synthase resH, the short chain dehydrogenase resG, the cyclase resF, the FAD-dependent monooxygenase resA and the enoylreductase resD are required to generate the first stable intermediate desmethylrestrictinol. ResH with resD biosynthesize the first polyketide chain intermediate that is reduced by resG, followed by epoxidation by resA before 6-endo cyclization via epoxide opening by resF leads to desmethylrestrictinol. The methyltransferase resE then catalyzes the C4 O-methylation of desmethylrestrictinol to produce restrictinol, and the nonribosomal peptide synthetase resC catalyzes the C3 esterification of restrictinol with glycine that leads to restricticin. This Aspergillus sclerotiorum protein is Nonribosomal peptide synthetase resC.